The sequence spans 459 residues: Bifunctional protein GlmU (459 aa).

The interval 1–229 is pyrophosphorylase; the sequence is MSNFAIILAA…FDESLGVNDR (229 aa). UDP-N-acetyl-alpha-D-glucosamine-binding positions include 8 to 11, Lys22, Gln72, and 77 to 78; these read LAAG and GT. A Mg(2+)-binding site is contributed by Asp102. Gly139, Glu154, Asn169, and Asn227 together coordinate UDP-N-acetyl-alpha-D-glucosamine. Asn227 is a Mg(2+) binding site. The tract at residues 230 to 250 is linker; it reads VALATAESVMRRRINHKHMVN. Residues 251 to 459 form an N-acetyltransferase region; it reads GVSFVNPEAT…TRLPHHPKNQ (209 aa). 2 residues coordinate UDP-N-acetyl-alpha-D-glucosamine: Arg332 and Lys350. His362 functions as the Proton acceptor in the catalytic mechanism. Tyr365 and Asn376 together coordinate UDP-N-acetyl-alpha-D-glucosamine. Acetyl-CoA-binding positions include Ala379, 385–386, Ser404, Ala422, and Arg439; that span reads NY.

The protein in the N-terminal section; belongs to the N-acetylglucosamine-1-phosphate uridyltransferase family. In the C-terminal section; belongs to the transferase hexapeptide repeat family. In terms of assembly, homotrimer. Mg(2+) serves as cofactor.

The protein resides in the cytoplasm. It carries out the reaction alpha-D-glucosamine 1-phosphate + acetyl-CoA = N-acetyl-alpha-D-glucosamine 1-phosphate + CoA + H(+). The catalysed reaction is N-acetyl-alpha-D-glucosamine 1-phosphate + UTP + H(+) = UDP-N-acetyl-alpha-D-glucosamine + diphosphate. The protein operates within nucleotide-sugar biosynthesis; UDP-N-acetyl-alpha-D-glucosamine biosynthesis; N-acetyl-alpha-D-glucosamine 1-phosphate from alpha-D-glucosamine 6-phosphate (route II): step 2/2. Its pathway is nucleotide-sugar biosynthesis; UDP-N-acetyl-alpha-D-glucosamine biosynthesis; UDP-N-acetyl-alpha-D-glucosamine from N-acetyl-alpha-D-glucosamine 1-phosphate: step 1/1. It participates in bacterial outer membrane biogenesis; LPS lipid A biosynthesis. In terms of biological role, catalyzes the last two sequential reactions in the de novo biosynthetic pathway for UDP-N-acetylglucosamine (UDP-GlcNAc). The C-terminal domain catalyzes the transfer of acetyl group from acetyl coenzyme A to glucosamine-1-phosphate (GlcN-1-P) to produce N-acetylglucosamine-1-phosphate (GlcNAc-1-P), which is converted into UDP-GlcNAc by the transfer of uridine 5-monophosphate (from uridine 5-triphosphate), a reaction catalyzed by the N-terminal domain. This Streptococcus pneumoniae (strain 70585) protein is Bifunctional protein GlmU.